Here is a 499-residue protein sequence, read N- to C-terminus: Neuronal acetylcholine receptor subunit alpha-3 (499 aa).

Positions 1–25 (MGVVLPPPPLSMLMLVLMLLPVASA) are cleaved as a signal peptide. The Extracellular portion of the chain corresponds to 26 to 244 (SEAEHRLFQY…PLFYTINLII (219 aa)). 2 N-linked (GlcNAc...) asparagine glycosylation sites follow: N49 and N166. 2 disulfides stabilise this stretch: C153/C167 and C217/C218. A helical transmembrane segment spans residues 245–260 (PCLLISFLTVLVFYLP). The Cytoplasmic portion of the chain corresponds to 261–262 (SD). Residues 263–279 (CGEKVTLCISVLLSLTV) traverse the membrane as a helical segment. E265 is a Na(+) binding site. Residues 280 to 301 (FLLVITETIPSTSLVIPLIGEY) lie on the Extracellular side of the membrane. Residues 302–320 (LLFTMIFVTLSIVITVFVL) traverse the membrane as a helical segment. Topologically, residues 321-468 (NVHYRTPTTH…QDDWKYVAMV (148 aa)) are cytoplasmic. Phosphoserine occurs at positions 407 and 410. The helical transmembrane segment at 469 to 487 (IDRIFLWVFILVCILGTAG) threads the bilayer. Topologically, residues 488-499 (LFLQPLMARDDT) are extracellular.

This sequence belongs to the ligand-gated ion channel (TC 1.A.9) family. Acetylcholine receptor (TC 1.A.9.1) subfamily. Alpha-3/CHRNA3 sub-subfamily. Neuronal AChR is composed of two different types of subunits: alpha and beta. CHRNA3/Alpha-3 subunit can be combined to CHRNB2/beta-2 or CHRNB4/beta-4 to give rise to functional receptors. Part of a complex composed of STUB1/CHIP, VCP/p97, CHRNA3, and UBXN2A that modulates the ubiquitination and endoplasmic reticulum-associated degradation (ERAD) of CHRNA3. Within the complex UBXN2A acts as a scaffold protein required for the interaction of CHRNA3 with VCP/p97, this interaction also inhibits CHRNA3 ubiquitination by STUB1/CHIP and subsequently ERAD. Interacts with UBXN2A (via SEP domain), the interaction is required for the interaction of CHRNA3 in the STUB1:VCP:UBXN2A complex. Interacts with RIC3; which is required for proper folding and assembly. Interacts with LYPD6. In terms of processing, ubiquitinated; by STUB1/CHIP and thereafter degraded by the 26S proteosome complex. In terms of tissue distribution, expressed in the brain (at protein level).

It localises to the synaptic cell membrane. The protein localises to the cell membrane. Its subcellular location is the endoplasmic reticulum. It is found in the golgi apparatus. The enzyme catalyses K(+)(in) = K(+)(out). The catalysed reaction is Na(+)(in) = Na(+)(out). It catalyses the reaction Ca(2+)(in) = Ca(2+)(out). With respect to regulation, activated by a myriad of ligands such as acetylcholine, cytisine, nicotine, choline and epibatidine. The heteropentamer CHRNA3:CHRNB2 activity is blocked by alpha-conotoxins ImI, ImII, PnIA, GID and MII. The heteropentamer CHRNA3:CHRNB4 activity is blocked by the alpha-conotoxin ImI. Its function is as follows. Component of neuronal acetylcholine receptors (nAChRs) that function as pentameric, ligand-gated cation channels with high calcium permeability among other activities. nAChRs are excitatory neurotrasnmitter receptors formed by a collection of nAChR subunits known to mediate synaptic transmission in the nervous system and the neuromuscular junction. Each nAchR subunit confers differential attributes to channel properties, including activation, deactivation and desensitization kinetics, pH sensitivity, cation permeability, and binding to allosteric modulators. CHRNA3 forms heteropentameric neuronal acetylcholine receptors with CHRNA5, CHRNB2 and CHRNB4. CHRNA3:CHRNB4 being predominant in neurons of the autonomic ganglia, it is known as ganglionic nicotinic receptor. CHRNA3:CHRNB4 or CHRNA3:CHRNA5:CHRNB4 play also an important role in the habenulo-interpeduncular tract, modulating the mesolimbic dopamine system and affecting reward circuits and addiction. Hypothalamic CHRNA3:CHRNB4 nAChR activation by nicotine leads to activation of POMC neurons and a decrease in food intake. Also expressed in the urothelium where it modulates reflex bladder activity by increasing intracellular calcium through extracellular influx and basal ATP release. This is Neuronal acetylcholine receptor subunit alpha-3 (Chrna3) from Mus musculus (Mouse).